We begin with the raw amino-acid sequence, 650 residues long: tRNA-dihydrouridine(47) synthase [NAD(P)(+)]-like (650 aa).

2 disordered regions span residues 1 to 24 (MAEGTAEAPLENGGGGDSGAGALE) and 46 to 120 (EAKG…NYDK). An N-acetylalanine modification is found at Ala-2. Basic and acidic residues-rich tracts occupy residues 48–58 (KGQEKTCRETE) and 70–79 (PEAKRIRLED). The span at 101–113 (KRARGQNKGRPHV) shows a compositional bias: basic residues. 2 C3H1-type zinc fingers span residues 118–148 (YDKNRLCPSLIQESAAKCFFGDRCRFLHDVG) and 156–186 (ADLGPRCVLFETFGRCPYGVTCRFAGAHLRP). Positions 235–284 (FSQGPTPAAAVPEGTAAEGAPRQENCGAQQVPAGPGTSTPPSSPVRTCGP) are disordered. Ser-236 carries the phosphoserine modification. At Thr-273 the chain carries Phosphothreonine. A phosphoserine mark is found at Ser-276 and Ser-277. Residues 311 to 313 (PLT) and Gln-365 contribute to the FMN site. The Proton donor role is filled by Cys-396. Residue Lys-416 forms a Glycyl lysine isopeptide (Lys-Gly) (interchain with G-Cter in SUMO2) linkage. Residues Lys-435, His-465, 497-499 (NGD), and 520-521 (AR) contribute to the FMN site.

Belongs to the Dus family. Dus3 subfamily. FMN serves as cofactor.

The catalysed reaction is 5,6-dihydrouridine(47) in tRNA + NAD(+) = uridine(47) in tRNA + NADH + H(+). It carries out the reaction 5,6-dihydrouridine(47) in tRNA + NADP(+) = uridine(47) in tRNA + NADPH + H(+). It catalyses the reaction a 5,6-dihydrouridine in mRNA + NAD(+) = a uridine in mRNA + NADH + H(+). The enzyme catalyses a 5,6-dihydrouridine in mRNA + NADP(+) = a uridine in mRNA + NADPH + H(+). Catalyzes the synthesis of dihydrouridine, a modified base, in various RNAs, such as tRNAs, mRNAs and some long non-coding RNAs (lncRNAs). Mainly modifies the uridine in position 47 (U47) in the D-loop of most cytoplasmic tRNAs. Also able to mediate the formation of dihydrouridine in some mRNAs, thereby regulating their translation. This chain is tRNA-dihydrouridine(47) synthase [NAD(P)(+)]-like, found in Homo sapiens (Human).